A 320-amino-acid chain; its full sequence is 4-diphosphocytidyl-2-C-methyl-D-erythritol kinase (320 aa).

The active site involves Lys-26. 111–121 lines the ATP pocket; the sequence is PVAGGMAGGSA. Residue Asp-153 is part of the active site.

Belongs to the GHMP kinase family. IspE subfamily.

It catalyses the reaction 4-CDP-2-C-methyl-D-erythritol + ATP = 4-CDP-2-C-methyl-D-erythritol 2-phosphate + ADP + H(+). It participates in isoprenoid biosynthesis; isopentenyl diphosphate biosynthesis via DXP pathway; isopentenyl diphosphate from 1-deoxy-D-xylulose 5-phosphate: step 3/6. Its function is as follows. Catalyzes the phosphorylation of the position 2 hydroxy group of 4-diphosphocytidyl-2C-methyl-D-erythritol. This is 4-diphosphocytidyl-2-C-methyl-D-erythritol kinase from Mycobacterium marinum (strain ATCC BAA-535 / M).